A 691-amino-acid polypeptide reads, in one-letter code: DNA ligase (691 aa).

NAD(+) contacts are provided by residues 41-45, 90-91, and E130; these read DAEYD and SL. K132 acts as the N6-AMP-lysine intermediate in catalysis. NAD(+) is bound by residues R153, E190, K307, and K331. Zn(2+) is bound by residues C425, C428, C443, and C449. The 82-residue stretch at 610–691 folds into the BRCT domain; that stretch reads APQGVLAGKT…LHQLLEGNTP (82 aa).

The protein belongs to the NAD-dependent DNA ligase family. LigA subfamily. It depends on Mg(2+) as a cofactor. Mn(2+) serves as cofactor.

It catalyses the reaction NAD(+) + (deoxyribonucleotide)n-3'-hydroxyl + 5'-phospho-(deoxyribonucleotide)m = (deoxyribonucleotide)n+m + AMP + beta-nicotinamide D-nucleotide.. Its function is as follows. DNA ligase that catalyzes the formation of phosphodiester linkages between 5'-phosphoryl and 3'-hydroxyl groups in double-stranded DNA using NAD as a coenzyme and as the energy source for the reaction. It is essential for DNA replication and repair of damaged DNA. In Burkholderia ambifaria (strain MC40-6), this protein is DNA ligase.